The primary structure comprises 455 residues: Notoamide E oxidase notB' (455 aa).

Residues 11 to 31 (PAILSPADLTVIIVGLGIAGL) form a helical membrane-spanning segment. FAD contacts are provided by glutamate 48 and glycine 61. Residue asparagine 75 is glycosylated (N-linked (GlcNAc...) asparagine). Arginine 121 provides a ligand contact to FAD. Residues arginine 199 and tyrosine 229 contribute to the active site. Aspartate 324 and glycine 337 together coordinate FAD.

It belongs to the paxM FAD-dependent monooxygenase family. The cofactor is FAD.

The protein localises to the membrane. The catalysed reaction is notoamide E + NADPH + O2 + H(+) = notoamide C + NADP(+) + H2O. It catalyses the reaction notoamide E + NADPH + O2 + H(+) = notoamide D + NADP(+) + H2O. It participates in alkaloid biosynthesis. FAD-dependent monooxygenase; part of the gene cluster that mediates the biosynthesis of notoamide, a fungal indole alkaloid that belongs to a family of natural products containing a characteristic bicyclo[2.2.2]diazaoctane core. The first step of notoamide biosynthesis involves coupling of L-proline and L-tryptophan by the bimodular NRPS notE', to produce cyclo-L-tryptophan-L-proline called brevianamide F. The reverse prenyltransferase notF' then acts as a deoxybrevianamide E synthase and converts brevianamide F to deoxybrevianamide E via reverse prenylation at C-2 of the indole ring leading to the bicyclo[2.2.2]diazaoctane core. Deoxybrevianamide E is further hydroxylated at C-6 of the indole ring, likely catalyzed by the cytochrome P450 monooxygenase notG', to yield 6-hydroxy-deoxybrevianamide E. 6-hydroxy-deoxybrevianamide E is a specific substrate of the prenyltransferase notC' for normal prenylation at C-7 to produce 6-hydroxy-7-prenyl-deoxybrevianamide, also called notoamide S. As the proposed pivotal branching point in notoamide biosynthesis, notoamide S can be diverted to notoamide E through an oxidative pyran ring closure putatively catalyzed by either notH' cytochrome P450 monooxygenase or the notD' FAD-linked oxidoreductase. This step would be followed by an indole 2,3-epoxidation-initiated pinacol-like rearrangement catalyzed by the notB' FAD-dependent monooxygenase leading to the formation of notoamide C and notoamide D. On the other hand notoamide S is converted to notoamide T by notH' (or notD'), a bifunctional oxidase that also functions as the intramolecular Diels-Alderase responsible for generation of (-)-notoamide T. To generate antipodal (+)-notoaminide T, notH (or notD) in Aspergillus strain MF297-2 is expected to catalyze a Diels-Alder reaction leading to the opposite stereochemistry. The remaining oxidoreductase notD' (or notH') likely catalyzes the oxidative pyran ring formation to yield (-)-stephacidin A. The FAD-dependent monooxygenase notI' is highly similar to notB' and is predicted to catalyze a similar conversion from (-)-stephacidin A to (+)-notoamide B via the 2,3-epoxidation of (-)-stephacidin A followed by a pinacol-type rearrangement. Finally, it remains unclear which enzyme could be responsible for the final hydroxylation steps leading to notoamide A and sclerotiamide. This chain is Notoamide E oxidase notB', found in Aspergillus versicolor.